Reading from the N-terminus, the 189-residue chain is GTPase HRas (189 aa).

N-acetylmethionine is present on Met-1. An N-acetylthreonine; in GTPase HRas, N-terminally processed modification is found at Thr-2. Residue 10 to 17 (GAGGVGKS) participates in GTP binding. The Effector region signature appears at 32–40 (YDPTIEDSY). GTP contacts are provided by residues 57–61 (DTAGQ) and 116–119 (NKCD). Cys-118 bears the S-nitrosocysteine mark. The tract at residues 166–185 (HKLRKLNPPDESGPGCMNCK) is hypervariable region. Residues Cys-181 and Cys-184 are each lipidated (S-palmitoyl cysteine). Cys-186 is modified (cysteine methyl ester). Cys-186 carries the S-farnesyl cysteine lipid modification. The propeptide at 187 to 189 (VIS) is removed in mature form.

It belongs to the small GTPase superfamily. Ras family. Palmitoylated by the ZDHHC9-GOLGA7 complex. A continuous cycle of de- and re-palmitoylation regulates rapid exchange between plasma membrane and Golgi.

It is found in the cell membrane. The protein resides in the golgi apparatus membrane. It carries out the reaction GTP + H2O = GDP + phosphate + H(+). With respect to regulation, alternates between an inactive form bound to GDP and an active form bound to GTP. Activated by a guanine nucleotide-exchange factor (GEF) and inactivated by a GTPase-activating protein (GAP). Functionally, ras proteins bind GDP/GTP and possess intrinsic GTPase activity. In Gallus gallus (Chicken), this protein is GTPase HRas (HRAS).